Here is a 396-residue protein sequence, read N- to C-terminus: Chaperone protein DnaJ (396 aa).

The 66-residue stretch at 6-71 (DYYEVLEVTK…DKRSRYDQFG (66 aa)) folds into the J domain. A CR-type zinc finger spans residues 154–236 (GVEKKFKLKK…CGGDGIVYGE (83 aa)). Residues Cys-167, Cys-170, Cys-184, Cys-187, Cys-210, Cys-213, Cys-224, and Cys-227 each coordinate Zn(2+). 4 CXXCXGXG motif repeats span residues 167 to 174 (CNHCHGTG), 184 to 191 (CPTCKGSG), 210 to 217 (CPTCNGEG), and 224 to 231 (CKECGGDG).

The protein belongs to the DnaJ family. As to quaternary structure, homodimer. The cofactor is Zn(2+).

Its subcellular location is the cytoplasm. In terms of biological role, participates actively in the response to hyperosmotic and heat shock by preventing the aggregation of stress-denatured proteins and by disaggregating proteins, also in an autonomous, DnaK-independent fashion. Unfolded proteins bind initially to DnaJ; upon interaction with the DnaJ-bound protein, DnaK hydrolyzes its bound ATP, resulting in the formation of a stable complex. GrpE releases ADP from DnaK; ATP binding to DnaK triggers the release of the substrate protein, thus completing the reaction cycle. Several rounds of ATP-dependent interactions between DnaJ, DnaK and GrpE are required for fully efficient folding. Also involved, together with DnaK and GrpE, in the DNA replication of plasmids through activation of initiation proteins. The chain is Chaperone protein DnaJ from Bacteroides thetaiotaomicron (strain ATCC 29148 / DSM 2079 / JCM 5827 / CCUG 10774 / NCTC 10582 / VPI-5482 / E50).